We begin with the raw amino-acid sequence, 579 residues long: Capsid vertex component 2 (579 aa).

Positions 1–46 are interaction with major capsid protein/MCP; the sequence is MSRFMHFYKSPVPLVLQAHKKNCLVYTNLRTRRLRLLAQLNQREKE. Residues 92-134 form a disordered region; that stretch reads RPNEQVSSSTTTGHNNTTGTPTQSVVSGTGAVTGTGGTSSVAP. A compositionally biased stretch (low complexity) spans 101–121; the sequence is TTTGHNNTTGTPTQSVVSGTG.

Belongs to the herpesviridae CVC2 protein family. Heterodimerizes with CVC1. Interacts with major capsid protein/MCP and triplex capsid protein 1/TRX1 at the pentamer vertices. Interacts with the large tegument protein/LTP.

The protein localises to the virion. It is found in the host nucleus. Functionally, capsid vertex-specific component that plays a role during viral DNA encapsidation, assuring correct genome cleavage and presumably stabilizing capsids that contain full-length viral genomes. Participates in the interaction between the capsid and the tegument through interaction with the large tegument protein/LTP. This is Capsid vertex component 2 from Elephantid herpesvirus 1 (isolate Asian elephant/Berlin/Kiba/1998) (EIHV-1).